The following is a 579-amino-acid chain: CTP synthase (579 aa).

The region spanning 310 to 558 (YVELHDAYLS…VAAAIGCLDQ (249 aa)) is the Glutamine amidotransferase type-1 domain. Residues cysteine 402, histidine 531, and glutamate 533 each act as for GATase activity in the active site.

Belongs to the CTP synthase family.

It carries out the reaction UTP + L-glutamine + ATP + H2O = CTP + L-glutamate + ADP + phosphate + 2 H(+). The protein operates within pyrimidine metabolism; CTP biosynthesis via de novo pathway; CTP from UDP: step 2/2. Its function is as follows. Catalyzes the ATP-dependent amination of UTP to CTP with either L-glutamine or ammonia as the source of nitrogen. The protein is CTP synthase (pyr-7) of Neurospora crassa (strain ATCC 24698 / 74-OR23-1A / CBS 708.71 / DSM 1257 / FGSC 987).